Here is a 273-residue protein sequence, read N- to C-terminus: 2-dehydro-3-deoxyphosphooctonate aldolase (273 aa).

Belongs to the KdsA family.

Its subcellular location is the cytoplasm. The catalysed reaction is D-arabinose 5-phosphate + phosphoenolpyruvate + H2O = 3-deoxy-alpha-D-manno-2-octulosonate-8-phosphate + phosphate. It functions in the pathway carbohydrate biosynthesis; 3-deoxy-D-manno-octulosonate biosynthesis; 3-deoxy-D-manno-octulosonate from D-ribulose 5-phosphate: step 2/3. The protein operates within bacterial outer membrane biogenesis; lipopolysaccharide biosynthesis. The sequence is that of 2-dehydro-3-deoxyphosphooctonate aldolase from Cyanothece sp. (strain PCC 7425 / ATCC 29141).